Consider the following 144-residue polypeptide: Large ribosomal subunit protein uL15 (144 aa).

A disordered region spans residues 1–48 (MIKLEYLQDPSPRKRRTKLLGRGPSSGHGKTSGRGHKGDGSRSGYKRR).

The protein belongs to the universal ribosomal protein uL15 family. Part of the 50S ribosomal subunit.

In terms of biological role, binds to the 23S rRNA. This chain is Large ribosomal subunit protein uL15, found in Chlamydia muridarum (strain MoPn / Nigg).